The sequence spans 134 residues: UPF0299 membrane protein KPK_1586 (134 aa).

4 consecutive transmembrane segments (helical) span residues 5-25 (LTIIWQYLRAFVLIYACLYAG), 26-46 (IFIAGLLPITIPGSIIGMLIL), 66-86 (ILIRYMALLFVPIGVGVMQYW), and 93-113 (LGPVVISCAISTLVVFVVVSW).

It belongs to the UPF0299 family.

It is found in the cell inner membrane. This is UPF0299 membrane protein KPK_1586 from Klebsiella pneumoniae (strain 342).